Here is a 132-residue protein sequence, read N- to C-terminus: Small ribosomal subunit protein uS11 (132 aa).

The protein belongs to the universal ribosomal protein uS11 family. Part of the 30S ribosomal subunit. Interacts with proteins S7 and S18. Binds to IF-3.

Its function is as follows. Located on the platform of the 30S subunit, it bridges several disparate RNA helices of the 16S rRNA. Forms part of the Shine-Dalgarno cleft in the 70S ribosome. This is Small ribosomal subunit protein uS11 from Chlamydia trachomatis serovar A (strain ATCC VR-571B / DSM 19440 / HAR-13).